A 169-amino-acid polypeptide reads, in one-letter code: Aspartic protease inhibitor 6 (169 aa).

An N-linked (GlcNAc...) asparagine glycan is attached at Asn-1. 2 disulfide bridges follow: Cys-30/Cys-75 and Cys-124/Cys-134.

Belongs to the protease inhibitor I3 (leguminous Kunitz-type inhibitor) family.

The protein localises to the vacuole. Its function is as follows. Inhibitor of cathepsin D (aspartic protease). May also inhibit trypsin and chymotrypsin (serine proteases). Protects the plant by inhibiting proteases of invading organisms. This chain is Aspartic protease inhibitor 6, found in Solanum tuberosum (Potato).